Here is a 95-residue protein sequence, read N- to C-terminus: uncharacterized protein (95 aa).

A signal peptide (or 21) is located at residues 1–24; the sequence is MKKLATLTALAGALTMAVATAAQA. Basic and acidic residues predominate over residues 55–89; it reads EGKCGADKAKSAEGKCGEGKCGADKAKSAEGKCGE. Residues 55–95 are disordered; that stretch reads EGKCGADKAKSAEGKCGEGKCGADKAKSAEGKCGEGKCGSK.

This is an uncharacterized protein from Haemophilus influenzae (strain ATCC 51907 / DSM 11121 / KW20 / Rd).